We begin with the raw amino-acid sequence, 157 residues long: SsrA-binding protein (157 aa).

The protein belongs to the SmpB family.

The protein resides in the cytoplasm. In terms of biological role, required for rescue of stalled ribosomes mediated by trans-translation. Binds to transfer-messenger RNA (tmRNA), required for stable association of tmRNA with ribosomes. tmRNA and SmpB together mimic tRNA shape, replacing the anticodon stem-loop with SmpB. tmRNA is encoded by the ssrA gene; the 2 termini fold to resemble tRNA(Ala) and it encodes a 'tag peptide', a short internal open reading frame. During trans-translation Ala-aminoacylated tmRNA acts like a tRNA, entering the A-site of stalled ribosomes, displacing the stalled mRNA. The ribosome then switches to translate the ORF on the tmRNA; the nascent peptide is terminated with the 'tag peptide' encoded by the tmRNA and targeted for degradation. The ribosome is freed to recommence translation, which seems to be the essential function of trans-translation. The polypeptide is SsrA-binding protein (Clostridium novyi (strain NT)).